The sequence spans 153 residues: 3-hydroxyacyl-[acyl-carrier-protein] dehydratase FabZ (153 aa).

The active site involves His54.

This sequence belongs to the thioester dehydratase family. FabZ subfamily.

It localises to the cytoplasm. It catalyses the reaction a (3R)-hydroxyacyl-[ACP] = a (2E)-enoyl-[ACP] + H2O. In terms of biological role, involved in unsaturated fatty acids biosynthesis. Catalyzes the dehydration of short chain beta-hydroxyacyl-ACPs and long chain saturated and unsaturated beta-hydroxyacyl-ACPs. In Chlamydia muridarum (strain MoPn / Nigg), this protein is 3-hydroxyacyl-[acyl-carrier-protein] dehydratase FabZ.